Reading from the N-terminus, the 254-residue chain is Triosephosphate isomerase (254 aa).

12–14 (NWK) serves as a coordination point for substrate. Catalysis depends on His-99, which acts as the Electrophile. Catalysis depends on Glu-169, which acts as the Proton acceptor. Residues Gly-175, Ser-214, and 235–236 (GG) each bind substrate.

Belongs to the triosephosphate isomerase family. In terms of assembly, homodimer.

The protein resides in the cytoplasm. The enzyme catalyses D-glyceraldehyde 3-phosphate = dihydroxyacetone phosphate. Its pathway is carbohydrate biosynthesis; gluconeogenesis. It participates in carbohydrate degradation; glycolysis; D-glyceraldehyde 3-phosphate from glycerone phosphate: step 1/1. In terms of biological role, involved in the gluconeogenesis. Catalyzes stereospecifically the conversion of dihydroxyacetone phosphate (DHAP) to D-glyceraldehyde-3-phosphate (G3P). This Chelativorans sp. (strain BNC1) protein is Triosephosphate isomerase.